The following is a 612-amino-acid chain: Alpha-1,3-galactosidase B (612 aa).

The N-terminal stretch at 1–19 (MKWYLWGAVVLLYSLFGSA) is a signal peptide. Cys-20 carries N-palmitoyl cysteine lipidation. Cys-20 is lipidated: S-diacylglycerol cysteine. PbH1 repeat units follow at residues 431-453 (TPTVLFSDNLIRNNRARGSLFST), 454-476 (PRQTVVENNVFDHTSGTAILLCG), and 487-536 (CRNV…VIDA).

Belongs to the glycosyl hydrolase 110 family. B subfamily.

The protein resides in the cell membrane. The catalysed reaction is Hydrolysis of terminal, non-reducing branched (1-&gt;3)-alpha-D-galactosidic residues, producing free D-galactose.. It catalyses the reaction Hydrolysis of terminal, non-reducing linear (1-&gt;3)-alpha-D-galactosidic residues, producing free D-galactose.. It carries out the reaction Hydrolysis of terminal, non-reducing alpha-D-galactose residues in alpha-D-galactosides, including galactose oligosaccharides, galactomannans and galactolipids.. Its function is as follows. Alpha-galactosidase. Removes both branched alpha-1,3-linked galactose residues of blood group B antigens and linear alpha-1,3-linked galactose structures. The sequence is that of Alpha-1,3-galactosidase B (glaB) from Parabacteroides distasonis (strain ATCC 8503 / DSM 20701 / CIP 104284 / JCM 5825 / NCTC 11152).